Reading from the N-terminus, the 403-residue chain is Putative transport protein TP_0553 (403 aa).

Transmembrane regions (helical) follow at residues 10–30, 31–51, 92–112, 202–222, 243–263, 271–291, 293–313, and 350–370; these read ISLF…FVPY, LTVL…YRAL, AAVF…FIAI, LYFF…ALPL, KGLF…YGIF, LAML…CVWL, VGIS…LFVA, and TFGF…FTVI.

It belongs to the autoinducer-2 exporter (AI-2E) (TC 2.A.86) family.

Its subcellular location is the cell membrane. This Treponema pallidum (strain Nichols) protein is Putative transport protein TP_0553.